A 99-amino-acid polypeptide reads, in one-letter code: Plastocyanin (99 aa).

In terms of domain architecture, Plastocyanin-like spans Leu1–Asn99. Residues His37, Cys84, His87, and Met92 each contribute to the Cu cation site.

The protein belongs to the plastocyanin family. The cofactor is Cu(2+).

It is found in the plastid. The protein resides in the chloroplast thylakoid membrane. Its function is as follows. Participates in electron transfer between P700 and the cytochrome b6-f complex in photosystem I. The polypeptide is Plastocyanin (PETE) (Mercurialis perennis (Dog's mercury)).